We begin with the raw amino-acid sequence, 465 residues long: Fusarisetin A cluster transcription factor fsa5 (465 aa).

The segment at residues 13–47 (CDRCRSHKLKCTVAPENTRSGSSRCTRCIRAQVTC) is a DNA-binding region (zn(2)-C6 fungal-type). The tract at residues 58-88 (STNVKKADLRSGTNGQETTSMQASTIVPGSP) is disordered. The span at 68-84 (SGTNGQETTSMQASTIV) shows a compositional bias: polar residues.

Its subcellular location is the nucleus. Its function is as follows. Transcription activator that specifically regulates the expression of the gene cluster that mediates the biosynthesis of fusarisetin A. This is Fusarisetin A cluster transcription factor fsa5 from Fusarium sp. (strain FN080326).